We begin with the raw amino-acid sequence, 265 residues long: MFVHPQFDPVAVSLGPLSIRWYGLMYLIGFAAAWLLGRYRASRPGSGWTPLQVDDLVTYMVLGVVVGGRLGYMLFYDLPAFLANPLSLVQVWQGGMSFHGGFLGVLAVVWFFGRKTGKGFWGVADFTAPLAPFGLFAGRIGNFINGELWGKATDLPWGVVFPDPRAGGVPRHPSQLYEALLEGAALFLIVWLYSSKKRQSGAVSGVFCVCYGLFRFAVELVRLPDPQLGYLAFGWLTMGQLLSLPVIVFGLWLLARRAPDQNASQ.

4 helical membrane passes run 17 to 37, 56 to 76, 92 to 112, and 117 to 137; these read LSIRWYGLMYLIGFAAAWLLG, LVTYMVLGVVVGGRLGYMLFY, WQGGMSFHGGFLGVLAVVWFF, and GKGFWGVADFTAPLAPFGLFA. An a 1,2-diacyl-sn-glycero-3-phospho-(1'-sn-glycerol)-binding site is contributed by R139. The next 3 helical transmembrane spans lie at 173 to 193, 201 to 221, and 235 to 255; these read PSQLYEALLEGAALFLIVWLY, GAVSGVFCVCYGLFRFAVELV, and WLTMGQLLSLPVIVFGLWLLA.

It belongs to the Lgt family.

Its subcellular location is the cell inner membrane. It carries out the reaction L-cysteinyl-[prolipoprotein] + a 1,2-diacyl-sn-glycero-3-phospho-(1'-sn-glycerol) = an S-1,2-diacyl-sn-glyceryl-L-cysteinyl-[prolipoprotein] + sn-glycerol 1-phosphate + H(+). Its pathway is protein modification; lipoprotein biosynthesis (diacylglyceryl transfer). Catalyzes the transfer of the diacylglyceryl group from phosphatidylglycerol to the sulfhydryl group of the N-terminal cysteine of a prolipoprotein, the first step in the formation of mature lipoproteins. The sequence is that of Phosphatidylglycerol--prolipoprotein diacylglyceryl transferase from Solidesulfovibrio magneticus (strain ATCC 700980 / DSM 13731 / RS-1) (Desulfovibrio magneticus).